The chain runs to 121 residues: Small ribosomal subunit protein bS16 (121 aa).

Residues 97–114 (LAKAKTKDEENDNSKVES) are compositionally biased toward basic and acidic residues. Positions 97–121 (LAKAKTKDEENDNSKVESEGNEAES) are disordered.

The protein belongs to the bacterial ribosomal protein bS16 family.

In Prochlorococcus marinus (strain AS9601), this protein is Small ribosomal subunit protein bS16.